Reading from the N-terminus, the 687-residue chain is MKERKSSKMPNNLPQLQNLIKRDSDSLIHTCFALSQFLQQLRHYQSNLQIFKLNPSHTSKVLQELVMFLCQVAHCYPGHLGSLPQELKDLLHKHHSVMDSDLRMTLCRALILLRNKDLISPTSILELFFELFRCNDKVLRQVLYTHIVTDIKNMNAKHKNNKVNSTLQNFMYTMLKDSNAVAAKKSLDVLIELYKRNVWKDAKTVNVITTACFSPVPKILVAALKFFLGSDEGSAGDDSDSESDVSYLKFEFLEMIMNSLASLLLPKHKKKHKQTSVNFSALHLINDPQGFSERLFKQLEASTGRFEVRIMLMNLISRLIGVHQLFVFNFYPFLQRYLQPHQREVTKLLMFFSQASHDLVPPEVVEPGVRTIVNNFVTERNSHEVMAVGLNAVREVCQRCPLVMTDTLLQDLAQYKTSKDKSVMMASQSLIQLFRSVNPNLLHKKDRGQPTESREDSKPLDYAAVEAKDYIPGAELINYANSTIILLYATLIPDGWETDEGCDDGSDEDGWIDVQHSSDEEQEDEDPSGENQEGEEDGQTRAARISQMRILTDEDFKKIRMKQLTKEVQPKLGKKRKRATTTEEPQGSRNELVALENIEGIYKKRKHDKASRLETVIAGRQDRPKYGTKKKAKMNEHAGTSNKEKRRKKNFMMMRHNKLVRGKTKRSFRDKQIALRDSLLKRKKSKI.

3 disordered regions span residues 517-549 (SSDEEQEDEDPSGENQEGEEDGQTRAARISQMR), 561-587 (MKQLTKEVQPKLGKKRKRATTTEEPQG), and 615-687 (TVIA…KSKI). Acidic residues predominate over residues 520–537 (EEQEDEDPSGENQEGEED). Positions 644 to 666 (EKRRKKNFMMMRHNKLVRGKTKR) are enriched in basic residues. The span at 667–680 (SFRDKQIALRDSLL) shows a compositional bias: basic and acidic residues.

The protein belongs to the SDA1 family.

The protein localises to the nucleus. It localises to the nucleolus. Its function is as follows. Required for 60S pre-ribosomal subunits export to the cytoplasm. This chain is Protein SDA1 homolog (sdad1), found in Nematostella vectensis (Starlet sea anemone).